A 142-amino-acid chain; its full sequence is Large ribosomal subunit protein uL13 (142 aa).

This sequence belongs to the universal ribosomal protein uL13 family. As to quaternary structure, part of the 50S ribosomal subunit.

This protein is one of the early assembly proteins of the 50S ribosomal subunit, although it is not seen to bind rRNA by itself. It is important during the early stages of 50S assembly. The chain is Large ribosomal subunit protein uL13 from Aeromonas salmonicida (strain A449).